The primary structure comprises 424 residues: Tyrosine--tRNA ligase (424 aa).

Tyr37 lines the L-tyrosine pocket. Residues 42-51 (PTADSLHLGH) carry the 'HIGH' region motif. Lys144 carries the N6-acetyllysine modification. Positions 175 and 179 each coordinate L-tyrosine. Residues 235–239 (KFGKT) carry the 'KMSKS' region motif. Lys238 lines the ATP pocket. Positions 357-414 (ADLMQALVDSELQPSRGQARKTIASNAITINGEKQSDPEYFFKEEDRLFGRFTLLRRG) constitute an S4 RNA-binding domain.

Belongs to the class-I aminoacyl-tRNA synthetase family. TyrS type 1 subfamily. Homodimer.

It localises to the cytoplasm. It carries out the reaction tRNA(Tyr) + L-tyrosine + ATP = L-tyrosyl-tRNA(Tyr) + AMP + diphosphate + H(+). In terms of biological role, catalyzes the attachment of tyrosine to tRNA(Tyr) in a two-step reaction: tyrosine is first activated by ATP to form Tyr-AMP and then transferred to the acceptor end of tRNA(Tyr). The sequence is that of Tyrosine--tRNA ligase from Escherichia coli O127:H6 (strain E2348/69 / EPEC).